The chain runs to 457 residues: Putative zinc finger CCCH domain-containing protein 21 (457 aa).

Disordered regions lie at residues 51–73, 102–130, 195–221, and 280–329; these read PTSSVSDGGGGGGGGYNSPARAS, LESPSSCISDGRGGGFGSPTSAFPPEKLL, TSPSSCVSDGRSGGYSSPLGASAERER, and RKQA…RLRV. The span at 57–66 shows a compositional bias: gly residues; the sequence is DGGGGGGGGY. Positions 215–276 form a coiled coil; the sequence is ASAEREREVR…HLSLLLEELE (62 aa). C3H1-type zinc fingers lie at residues 382-409 and 419-447; these read AAKTELCNKWERGACPYGARCRFAHGLQ and RYKTLPCQMFAAASGCPYGHRCHFRHSPL.

This chain is Putative zinc finger CCCH domain-containing protein 21, found in Oryza sativa subsp. japonica (Rice).